The primary structure comprises 156 residues: ATP synthase subunit b (156 aa).

A helical membrane pass occupies residues 1-21 (MSINATLLIQIIAFVLLIWFV).

This sequence belongs to the ATPase B chain family. As to quaternary structure, F-type ATPases have 2 components, F(1) - the catalytic core - and F(0) - the membrane proton channel. F(1) has five subunits: alpha(3), beta(3), gamma(1), delta(1), epsilon(1). F(0) has three main subunits: a(1), b(2) and c(10-14). The alpha and beta chains form an alternating ring which encloses part of the gamma chain. F(1) is attached to F(0) by a central stalk formed by the gamma and epsilon chains, while a peripheral stalk is formed by the delta and b chains.

The protein resides in the cell inner membrane. Functionally, f(1)F(0) ATP synthase produces ATP from ADP in the presence of a proton or sodium gradient. F-type ATPases consist of two structural domains, F(1) containing the extramembraneous catalytic core and F(0) containing the membrane proton channel, linked together by a central stalk and a peripheral stalk. During catalysis, ATP synthesis in the catalytic domain of F(1) is coupled via a rotary mechanism of the central stalk subunits to proton translocation. In terms of biological role, component of the F(0) channel, it forms part of the peripheral stalk, linking F(1) to F(0). The polypeptide is ATP synthase subunit b (Hydrogenovibrio crunogenus (strain DSM 25203 / XCL-2) (Thiomicrospira crunogena)).